The primary structure comprises 851 residues: DNA mismatch repair protein MutS (851 aa).

Position 614–621 (614–621) interacts with ATP; the sequence is GPNMGGKS.

Belongs to the DNA mismatch repair MutS family.

In terms of biological role, this protein is involved in the repair of mismatches in DNA. It is possible that it carries out the mismatch recognition step. This protein has a weak ATPase activity. This Photorhabdus laumondii subsp. laumondii (strain DSM 15139 / CIP 105565 / TT01) (Photorhabdus luminescens subsp. laumondii) protein is DNA mismatch repair protein MutS.